Reading from the N-terminus, the 447-residue chain is N-succinylarginine dihydrolase (447 aa).

Substrate-binding positions include 19 to 28 (AGLSFGNEAS), N110, and 137 to 138 (HR). Residue E174 is part of the active site. R212 is a binding site for substrate. H248 is an active-site residue. Substrate-binding residues include D250 and N359. The Nucleophile role is filled by C365.

Belongs to the succinylarginine dihydrolase family. As to quaternary structure, homodimer.

The enzyme catalyses N(2)-succinyl-L-arginine + 2 H2O + 2 H(+) = N(2)-succinyl-L-ornithine + 2 NH4(+) + CO2. It participates in amino-acid degradation; L-arginine degradation via AST pathway; L-glutamate and succinate from L-arginine: step 2/5. Catalyzes the hydrolysis of N(2)-succinylarginine into N(2)-succinylornithine, ammonia and CO(2). This Escherichia coli O17:K52:H18 (strain UMN026 / ExPEC) protein is N-succinylarginine dihydrolase.